The following is a 345-amino-acid chain: Pectin lyase (345 aa).

Positions 1–24 (MKRFCLWFAVFSLLLVLLPGKAFG) are cleaved as a signal peptide. Arginine 234 is a catalytic residue.

This sequence belongs to the polysaccharide lyase 1 family.

It is found in the secreted. It catalyses the reaction Eliminative cleavage of (1-&gt;4)-alpha-D-galacturonan methyl ester to give oligosaccharides with 4-deoxy-6-O-methyl-alpha-D-galact-4-enuronosyl groups at their non-reducing ends.. With respect to regulation, inhibited by Hg(2+) and Mn(2+). Not affected by EDTA in vitro. In terms of biological role, catalyzes the depolymerization of pectins of methyl esterification degree from 13 to 75%, with an endo mode of action. Cannot degrade polygalacturonate. Also displays protopectinase activity, i.e. releases pectin from protopectin. The sequence is that of Pectin lyase (pelB) from Bacillus subtilis.